A 118-amino-acid polypeptide reads, in one-letter code: D-dopachrome decarboxylase (118 aa).

An N-acetylproline modification is found at proline 2. The residue at position 33 (lysine 33) is an N6-acetyllysine.

This sequence belongs to the MIF family. As to quaternary structure, homotrimer. In terms of tissue distribution, highly expressed in the liver and at lower levels in the heart, lung and pancreas.

The protein localises to the cytoplasm. The catalysed reaction is D-dopachrome + H(+) = 5,6-dihydroxyindole + CO2. In terms of biological role, tautomerization of D-dopachrome with decarboxylation to give 5,6-dihydroxyindole (DHI). In Homo sapiens (Human), this protein is D-dopachrome decarboxylase (DDT).